We begin with the raw amino-acid sequence, 443 residues long: 3-phosphoshikimate 1-carboxyvinyltransferase (443 aa).

The 3-phosphoshikimate site is built by lysine 24, serine 25, and arginine 29. Residue lysine 24 coordinates phosphoenolpyruvate. Glycine 95 and arginine 123 together coordinate phosphoenolpyruvate. Positions 167, 169, 323, and 350 each coordinate 3-phosphoshikimate. Glutamine 169 contacts phosphoenolpyruvate. Catalysis depends on aspartate 323, which acts as the Proton acceptor. Phosphoenolpyruvate-binding residues include arginine 354 and arginine 398.

It belongs to the EPSP synthase family. Monomer.

It localises to the cytoplasm. The enzyme catalyses 3-phosphoshikimate + phosphoenolpyruvate = 5-O-(1-carboxyvinyl)-3-phosphoshikimate + phosphate. The protein operates within metabolic intermediate biosynthesis; chorismate biosynthesis; chorismate from D-erythrose 4-phosphate and phosphoenolpyruvate: step 6/7. In terms of biological role, catalyzes the transfer of the enolpyruvyl moiety of phosphoenolpyruvate (PEP) to the 5-hydroxyl of shikimate-3-phosphate (S3P) to produce enolpyruvyl shikimate-3-phosphate and inorganic phosphate. In Caulobacter vibrioides (strain ATCC 19089 / CIP 103742 / CB 15) (Caulobacter crescentus), this protein is 3-phosphoshikimate 1-carboxyvinyltransferase.